The primary structure comprises 497 residues: MSKYILALDQGTTSSRAILFTREGDIKQIAQKEFTQIYPQPGWVEHNANEIFDTQSWVMTECLQRAGVNASEVAAIGITNQRETTVVWDRKSGAPVHNAIVWQDRRTASICDEMKKRGLAETIREKTGLVIDAYFSGTKVKWILDNVPGARAKAERGELCFGTIDTWVIWNLTKGKEHVTDESNASRTMLFNIHTGDWDEELLKILDVPRSMLPRVAGSSEVVAETHPEFLGKAVPVSGIAGDQQAATFGNACLTEGMAKNTYGTGCFMLLNTGKQAHISKNNLLTTTGWNTPSGRYYCLEGSVFIAGAVVQWLRDGLGIIQSAPEVEQLALSVPDNGGVVLVPAFAGLGAPHWDQYARGTMVGVTRGTTKAHIARAALESIALQTLDIMDCMQKDAGINLAALRADGGATRNNLLMQFQADVLGVPVERPKVTETTALGAAYLAGLAVGFWKSEDEITAMWQLDRRFEPNMSAEVREKLVYNWKRAVERSKEWAED.

An ADP-binding site is contributed by Thr12. Positions 12, 13, and 14 each coordinate ATP. Sn-glycerol 3-phosphate is bound at residue Thr12. Arg16 contributes to the ADP binding site. Residues Arg82, Glu83, Tyr134, and Asp243 each coordinate sn-glycerol 3-phosphate. Glycerol-binding residues include Arg82, Glu83, Tyr134, Asp243, and Gln244. Thr265 and Gly308 together coordinate ADP. The ATP site is built by Thr265, Gly308, Gln312, and Gly409. Gly409 and Asn413 together coordinate ADP.

This sequence belongs to the FGGY kinase family.

The catalysed reaction is glycerol + ATP = sn-glycerol 3-phosphate + ADP + H(+). The protein operates within polyol metabolism; glycerol degradation via glycerol kinase pathway; sn-glycerol 3-phosphate from glycerol: step 1/1. With respect to regulation, inhibited by fructose 1,6-bisphosphate (FBP). Its function is as follows. Key enzyme in the regulation of glycerol uptake and metabolism. Catalyzes the phosphorylation of glycerol to yield sn-glycerol 3-phosphate. The polypeptide is Glycerol kinase (Oleidesulfovibrio alaskensis (strain ATCC BAA-1058 / DSM 17464 / G20) (Desulfovibrio alaskensis)).